We begin with the raw amino-acid sequence, 231 residues long: Ribonuclease P protein component 3 (231 aa).

It belongs to the eukaryotic/archaeal RNase P protein component 3 family. As to quaternary structure, consists of a catalytic RNA component and at least 4-5 protein subunits.

It localises to the cytoplasm. It catalyses the reaction Endonucleolytic cleavage of RNA, removing 5'-extranucleotides from tRNA precursor.. In terms of biological role, part of ribonuclease P, a protein complex that generates mature tRNA molecules by cleaving their 5'-ends. This is Ribonuclease P protein component 3 from Methanococcus maripaludis (strain C5 / ATCC BAA-1333).